Reading from the N-terminus, the 212-residue chain is MQLFHLCLIISCSCPTVQASKLCLGWLRGMDIDTYKEFGASVELLSFLPSDFFPSIRDLLDTAFALHREALESPEHCSPHHTALRQAIVCWGELMNLATWVGSNLEDPASRELVVSYVNVNMGLKIRQLLWFHISCLTFGRETVLEYLVSVGVWIRTPQAYRPPNAPILSTLPETTVVRRRGRSPRRRTPSPRRRRSKSPRRRRSQSRESQC.

Positions 1–19 are cleaved as a signal peptide; sequence MQLFHLCLIISCSCPTVQA. Positions 25 to 27 are HBEAG; that stretch reads GWL. A disordered region spans residues 172 to 212; sequence LPETTVVRRRGRSPRRRTPSPRRRRSKSPRRRRSQSRESQC. Positions 178–205 are enriched in basic residues; it reads VRRRGRSPRRRTPSPRRRRSKSPRRRRS. The 1; half-length repeat unit spans residues 184–189; that stretch reads SPRRRT. Positions 184 to 205 are 3 X 7 AA repeats of S-P-R-R-R-R-S; the sequence is SPRRRTPSPRRRRSKSPRRRRS. The propeptide occupies 184-212; it reads SPRRRTPSPRRRRSKSPRRRRSQSRESQC. 2 repeat units span residues 191–197 and 199–205.

The protein belongs to the orthohepadnavirus precore antigen family. In terms of assembly, homodimerizes. In terms of processing, phosphorylated. Post-translationally, cleaved by host furin.

It is found in the secreted. It localises to the host nucleus. Functionally, may regulate immune response to the intracellular capsid in acting as a T-cell tolerogen, by having an immunoregulatory effect which prevents destruction of infected cells by cytotoxic T-cells. This immune regulation may predispose to chronicity during perinatal infections and prevent severe liver injury during adult infections. In Hepatitis B virus genotype C subtype adr (isolate Japan/Nishioka/1983) (HBV-C), this protein is External core antigen.